The following is a 394-amino-acid chain: 8-amino-7-oxononanoate synthase (394 aa).

Arg-22 contributes to the substrate binding site. 113–114 (GY) contacts pyridoxal 5'-phosphate. His-138 serves as a coordination point for substrate. 3 residues coordinate pyridoxal 5'-phosphate: Ser-184, His-212, and Thr-240. Position 243 is an N6-(pyridoxal phosphate)lysine (Lys-243). Thr-359 provides a ligand contact to substrate.

Belongs to the class-II pyridoxal-phosphate-dependent aminotransferase family. BioF subfamily. Homodimer. It depends on pyridoxal 5'-phosphate as a cofactor.

It catalyses the reaction 6-carboxyhexanoyl-[ACP] + L-alanine + H(+) = (8S)-8-amino-7-oxononanoate + holo-[ACP] + CO2. Its pathway is cofactor biosynthesis; biotin biosynthesis. Catalyzes the decarboxylative condensation of pimeloyl-[acyl-carrier protein] and L-alanine to produce 8-amino-7-oxononanoate (AON), [acyl-carrier protein], and carbon dioxide. The protein is 8-amino-7-oxononanoate synthase of Janthinobacterium sp. (strain Marseille) (Minibacterium massiliensis).